The chain runs to 275 residues: Uronate dehydrogenase (275 aa).

NAD(+)-binding positions include 22–23 (GL), 42–44 (DIA), 60–61 (DL), and 80–84 (FGGVS). Substrate-binding positions include serine 84 and 120–122 (SNH). The active-site Proton acceptor is tyrosine 145. Residue lysine 149 participates in NAD(+) binding. Serine 174 is a binding site for substrate. Serine 175 is an NAD(+) binding site. Arginine 183 lines the substrate pocket.

Belongs to the NAD(P)-dependent epimerase/dehydratase family. Homohexamer.

It carries out the reaction beta-D-galacturonate + NAD(+) = D-galactaro-1,5-lactone + NADH + H(+). The catalysed reaction is beta-D-glucuronate + NAD(+) = D-glucaro-1,5-lactone + NADH + H(+). It participates in carbohydrate acid metabolism; D-galacturonate degradation via prokaryotic oxidative pathway. In terms of biological role, catalyzes the oxidation of beta-D-galacturonate and beta-D-glucuronate to galactarate and D-glucarate, respectively. Cannot use NADP(+) instead of NAD(+) as cosubstrate. In Pseudomonas syringae pv. tomato (strain ATCC BAA-871 / DC3000), this protein is Uronate dehydrogenase (udh).